The chain runs to 393 residues: Rhizopuspepsin (393 aa).

The first 21 residues, 1-21 (MKFTLISSCIAIAALAVAVDA), serve as a signal peptide directing secretion. Positions 22–68 (APGEKKISIPLAKNPNYKPSAKNAIQKAIAKYNKHKINTSTGGIVPD) are cleaved as a propeptide — activation peptide. The Peptidase A1 domain occupies 85–389 (YYGQVTIGTP…NQGVPEVQIA (305 aa)). Residue Asp103 is part of the active site. Residues Cys116 and Cys119 are joined by a disulfide bond. Residue Asp286 is part of the active site. Cysteines 320 and 353 form a disulfide.

This sequence belongs to the peptidase A1 family.

It catalyses the reaction Hydrolysis of proteins with broad specificity similar to that of pepsin A, preferring hydrophobic residues at P1 and P1'. Clots milk and activates trypsinogen. Does not cleave 4-Gln-|-His-5, but does cleave 10-His-|-Leu-11 and 12-Val-|-Glu-13 in B chain of insulin.. In Rhizopus chinensis (Bread mold), this protein is Rhizopuspepsin.